Reading from the N-terminus, the 85-residue chain is Small ribosomal subunit protein bS16 (85 aa).

This sequence belongs to the bacterial ribosomal protein bS16 family.

The sequence is that of Small ribosomal subunit protein bS16 from Metamycoplasma arthritidis (strain 158L3-1) (Mycoplasma arthritidis).